We begin with the raw amino-acid sequence, 89 residues long: Small ribosomal subunit protein uS15 (89 aa).

This sequence belongs to the universal ribosomal protein uS15 family. Part of the 30S ribosomal subunit. Forms a bridge to the 50S subunit in the 70S ribosome, contacting the 23S rRNA.

One of the primary rRNA binding proteins, it binds directly to 16S rRNA where it helps nucleate assembly of the platform of the 30S subunit by binding and bridging several RNA helices of the 16S rRNA. Its function is as follows. Forms an intersubunit bridge (bridge B4) with the 23S rRNA of the 50S subunit in the ribosome. The chain is Small ribosomal subunit protein uS15 from Frankia casuarinae (strain DSM 45818 / CECT 9043 / HFP020203 / CcI3).